We begin with the raw amino-acid sequence, 871 residues long: Metabotropic glutamate receptor 6 (871 aa).

An N-terminal signal peptide occupies residues 1–23 (MGRLPVLLLWLAWWLSQAGIACG). The Extracellular segment spans residues 24–579 (AGSVRLAGGL…VVRLTWSSPW (556 aa)). C51 and C93 form a disulfide bridge. Residues S148, 169 to 171 (AST), and Y219 each bind L-glutamate. Disulfide bonds link C238/C530, C361/C377, C417/C424, C512/C531, C516/C534, C537/C549, and C552/C565. The N-linked (GlcNAc...) asparagine glycan is linked to N290. D301 provides a ligand contact to L-glutamate. K394 contributes to the L-glutamate binding site. N-linked (GlcNAc...) asparagine glycosylation is found at N445 and N473. A glycan (N-linked (GlcNAc...) asparagine) is linked at N561. A helical transmembrane segment spans residues 580-602 (AALPLLLAVLGIMATTTIMATFM). The Cytoplasmic segment spans residues 603–616 (RHNDTPIVRASGRE). A helical transmembrane segment spans residues 617 to 637 (LSYVLLTGIFLIYAITFLMVA). Residues 638–648 (EPCAAICAARR) lie on the Extracellular side of the membrane. A helical transmembrane segment spans residues 649–667 (LLLGLGTTLSYSALLTKTN). Over 668-691 (RIYRIFEQGKRSVTPPPFISPTSQ) the chain is Cytoplasmic. The helical transmembrane segment at 692–712 (LVITFGLTSLQVVGVIAWLGA) threads the bilayer. Residues 713–742 (QPPHSVIDYEEQRTVDPEQARGVLKCDMSD) lie on the Extracellular side of the membrane. The chain crosses the membrane as a helical span at residues 743 to 764 (LSLIGCLGYSLLLMVTCTVYAI). The Cytoplasmic portion of the chain corresponds to 765–777 (KARGVPETFNEAK). The helical transmembrane segment at 778-800 (PIGFTMYTTCIIWLAFVPIFFGT) threads the bilayer. Residues 801–813 (AQSAEKIYIQTTT) lie on the Extracellular side of the membrane. Residues 814 to 839 (LTVSLSLSASVSLGMLYVPKTYVILF) form a helical membrane-spanning segment. Residues 840-871 (HPEQNVQKRKRSLKKTSTMAAPPQNENAEDAK) lie on the Cytoplasmic side of the membrane. Residues 850 to 871 (RSLKKTSTMAAPPQNENAEDAK) are disordered.

This sequence belongs to the G-protein coupled receptor 3 family. Homodimer. Interacts with GPR179. Interacts with photoreceptor synaptic protein LRIT1 (via its N-terminal extracellular domain). As to expression, restricted expression in the inner nuclear layer of the retina.

It localises to the cell membrane. Its subcellular location is the endoplasmic reticulum membrane. The protein resides in the golgi apparatus membrane. It is found in the cell projection. The protein localises to the dendrite. Functionally, G-protein coupled receptor for glutamate. Ligand binding causes a conformation change that triggers signaling via guanine nucleotide-binding proteins (G proteins) and modulates the activity of down-stream effectors, such as adenylate cyclase. Signaling inhibits adenylate cyclase activity. Signaling stimulates TRPM1 channel activity and Ca(2+) uptake. Required for normal vision. This is Metabotropic glutamate receptor 6 (Grm6) from Rattus norvegicus (Rat).